Here is a 503-residue protein sequence, read N- to C-terminus: Aminoaldehyde dehydrogenase 2, peroxisomal (503 aa).

Ile28 and Asp99 together coordinate Na(+). Trp161 and Lys185 together coordinate NAD(+). Leu189 is a binding site for Na(+). Ser239 provides a ligand contact to NAD(+). Catalysis depends on Glu260, which acts as the Proton acceptor. Residue Cys294 is the Nucleophile of the active site. Residues 501-503 (AKL) carry the Microbody targeting signal motif.

It belongs to the aldehyde dehydrogenase family. As to quaternary structure, forms homodimers.

It localises to the peroxisome. It carries out the reaction 3-aminopropanal + NAD(+) + H2O = beta-alanine + NADH + 2 H(+). It catalyses the reaction 4-aminobutanal + NAD(+) + H2O = 4-aminobutanoate + NADH + 2 H(+). The enzyme catalyses 4-guanidinobutanal + NAD(+) + H2O = 4-guanidinobutanoate + NADH + 2 H(+). The protein operates within amine and polyamine biosynthesis; betaine biosynthesis via choline pathway; betaine from betaine aldehyde: step 1/1. Functionally, dehydrogenase that catalyzes the oxidation of several aminoaldehydes. Metabolizes and detoxifies aldehyde products of polyamine degradation to non-toxic amino acids. Catalyzes the oxidation of 3-aminopropanal to beta-alanine. Catalyzes the oxidation of 4-aminobutanal to 4-aminobutanoate. Catalyzes the oxidation of 4-guanidinobutanal to 4-guanidinobutanoate. In Pisum sativum (Garden pea), this protein is Aminoaldehyde dehydrogenase 2, peroxisomal.